The sequence spans 419 residues: Peptide chain release factor subunit 1 (419 aa).

This sequence belongs to the eukaryotic release factor 1 family. As to quaternary structure, heterodimer of two subunits, one of which binds GTP.

The protein resides in the cytoplasm. Directs the termination of nascent peptide synthesis (translation) in response to the termination codons UAA, UAG and UGA. The polypeptide is Peptide chain release factor subunit 1 (Methanococcus maripaludis (strain C6 / ATCC BAA-1332)).